A 177-amino-acid polypeptide reads, in one-letter code: Large ribosomal subunit protein uL6 (177 aa).

The protein belongs to the universal ribosomal protein uL6 family. In terms of assembly, part of the 50S ribosomal subunit.

Its function is as follows. This protein binds to the 23S rRNA, and is important in its secondary structure. It is located near the subunit interface in the base of the L7/L12 stalk, and near the tRNA binding site of the peptidyltransferase center. This Shewanella frigidimarina (strain NCIMB 400) protein is Large ribosomal subunit protein uL6.